Here is a 172-residue protein sequence, read N- to C-terminus: 3-phenylpropionate/cinnamic acid dioxygenase subunit beta (172 aa).

This sequence belongs to the bacterial ring-hydroxylating dioxygenase beta subunit family. In terms of assembly, this dioxygenase system consists of four proteins: the two subunits of the hydroxylase component (HcaE and HcaF), a ferredoxin (HcaC) and a ferredoxin reductase (HcaD).

It carries out the reaction 3-phenylpropanoate + NADH + O2 + H(+) = 3-(cis-5,6-dihydroxycyclohexa-1,3-dien-1-yl)propanoate + NAD(+). The enzyme catalyses (E)-cinnamate + NADH + O2 + H(+) = (2E)-3-(cis-5,6-dihydroxycyclohexa-1,3-dien-1-yl)prop-2-enoate + NAD(+). The protein operates within aromatic compound metabolism; 3-phenylpropanoate degradation. Functionally, part of the multicomponent 3-phenylpropionate dioxygenase. Converts 3-phenylpropionic acid (PP) and cinnamic acid (CI) into 3-phenylpropionate-dihydrodiol (PP-dihydrodiol) and cinnamic acid-dihydrodiol (CI-dihydrodiol), respectively. The chain is 3-phenylpropionate/cinnamic acid dioxygenase subunit beta from Shigella sonnei (strain Ss046).